Reading from the N-terminus, the 158-residue chain is UPF0311 protein CA_C3321 (158 aa).

Belongs to the UPF0311 family.

In Clostridium acetobutylicum (strain ATCC 824 / DSM 792 / JCM 1419 / IAM 19013 / LMG 5710 / NBRC 13948 / NRRL B-527 / VKM B-1787 / 2291 / W), this protein is UPF0311 protein CA_C3321.